Consider the following 1085-residue polypeptide: Voltage-dependent calcium channel subunit alpha-2/delta-3 (1085 aa).

The N-terminal stretch at 1–33 (MAGPGSLCCASRGASALLATALLYAALGDVVRS) is a signal peptide. Topologically, residues 34 to 1062 (EQQIPLSVVK…HPEENARECG (1029 aa)) are extracellular. N-linked (GlcNAc...) asparagine glycosylation is present at Asn166. In terms of domain architecture, VWFA spans 256–438 (DVVILVDVSG…ENVMEYLHVL (183 aa)). Asp262, Ser264, and Ser266 together coordinate a divalent metal cation. The short motif at 262–266 (DVSGS) is the MIDAS-like motif element. An N-linked (GlcNAc...) asparagine glycan is attached at Asn309. Cys412 and Cys1049 are joined by a disulfide. The Cache domain occupies 452–543 (WTEAYIDSTL…RPLYEEGKKR (92 aa)). N-linked (GlcNAc...) asparagine glycosylation is found at Asn547 and Asn626. Tyr918 carries the post-translational modification Phosphotyrosine. A helical transmembrane segment spans residues 1063 to 1083 (GASSLQAQVALLLLPLVSSLF). The Cytoplasmic segment spans residues 1084–1085 (SR).

This sequence belongs to the calcium channel subunit alpha-2/delta family. Dimer formed of alpha-2-2 and delta-2 chains; disulfide-linked. Voltage-dependent calcium channels are multisubunit complexes, consisting of alpha-1 (CACNA1), alpha-2 (CACNA2D), beta (CACNB) and delta (CACNA2D) subunits in a 1:1:1:1 ratio. In terms of processing, N-glycosylated. Post-translationally, may be proteolytically processed into subunits alpha-2-3 and delta-3 that are disulfide-linked. It is however unclear whether such cleavage really takes place in vivo and has a functional role. In terms of tissue distribution, in heart, it is expressed in atrium but not in ventricle.

The protein localises to the membrane. In terms of biological role, the alpha-2/delta subunit of voltage-dependent calcium channels regulates calcium current density and activation/inactivation kinetics of the calcium channel. Acts as a regulatory subunit for P/Q-type calcium channel (CACNA1A), N-type (CACNA1B), L-type (CACNA1C OR CACNA1D) but not T-type (CACNA1G). This Rattus norvegicus (Rat) protein is Voltage-dependent calcium channel subunit alpha-2/delta-3 (Cacna2d3).